The following is a 45-amino-acid chain: Bomanin Short 1 (45 aa).

Positions 1 to 20 (MKFFSVVTVFVLGLLAVANA) are cleaved as a signal peptide. Positions 21–27 (VPLSPDP) are cleaved as a propeptide — removed by a dipeptidylpeptidase. The cysteines at positions 36 and 39 are disulfide-linked. Glycine amide is present on G43.

Hemolymph (at protein level).

The protein resides in the secreted. Its function is as follows. Secreted immune-induced peptide induced by Toll signaling. Has a role in resistance to bacterial and fungal infections. Has no activity against the fungus C.glabrata in vitro. This is Bomanin Short 1 from Drosophila melanogaster (Fruit fly).